The chain runs to 229 residues: Calcyclin-binding protein (229 aa).

An N-acetylalanine modification is found at Ala2. The interval 2–81 (ASALEELQKD…YTVKISNYGW (80 aa)) is interaction with SIAH1. At Ser3 the chain carries Phosphoserine. Residues Lys10 and Lys21 each carry the N6-acetyllysine modification. Ser36 is modified (phosphoserine). Positions 38 to 59 (IETELRNKMQQKSQKKPEFDNE) are disordered. The region spanning 74–168 (VKISNYGWDQ…AENTRWDYLT (95 aa)) is the CS domain. The interaction with SKP1 stretch occupies residues 74-229 (VKISNYGWDQ…EKQAREDTEF (156 aa)). Lys86 and Lys119 each carry N6-acetyllysine. The tract at residues 155 to 229 (CRKKAENTRW…EKQAREDTEF (75 aa)) is interaction with S100A6. The SGS domain maps to 169–229 (QVEKECKEKE…EKQAREDTEF (61 aa)).

Component of some large E3 complex at least composed of UBE2D1, SIAH1, CACYBP/SIP, SKP1, APC and TBL1X. Interacts directly with SIAH1, SIAH2 and SKP1. Interacts with protein of the S100 family S100A1, S100A6, S100B, S100P and S100A12 in a calcium-dependent manner. In terms of processing, phosphorylated on serine residues. Phosphorylated upon induction by RA or at high calcium concentrations.

Its subcellular location is the nucleus. It localises to the cytoplasm. Functionally, may be involved in calcium-dependent ubiquitination and subsequent proteasomal degradation of target proteins. Probably serves as a molecular bridge in ubiquitin E3 complexes. Participates in the ubiquitin-mediated degradation of beta-catenin (CTNNB1). This Rattus norvegicus (Rat) protein is Calcyclin-binding protein (Cacybp).